The sequence spans 237 residues: Glutathione S-transferase L1 (237 aa).

One can recognise a GST N-terminal domain in the interval 29–110 (GTTRLYISYT…YVDSNFDGPS (82 aa)). Glutathione contacts are provided by residues 39–40 (CP), 67–68 (NR), 81–82 (KV), and 94–95 (ES). In terms of domain architecture, GST C-terminal spans 112–232 (YPEDSAKREF…KTDSEYVVNY (121 aa)).

Belongs to the GST superfamily. Lambda family.

The protein localises to the cytoplasm. It localises to the cytosol. It catalyses the reaction RX + glutathione = an S-substituted glutathione + a halide anion + H(+). In terms of biological role, catalyzes the glutathione-dependent reduction of S-glutathionylquercetin to quercetin. In vitro, possesses glutathione-dependent thiol transferase activity toward 2-hydroxyethyl disulfide (HED). This Arabidopsis thaliana (Mouse-ear cress) protein is Glutathione S-transferase L1 (GSTL1).